Reading from the N-terminus, the 155-residue chain is Small ribosomal subunit protein uS7 (155 aa).

It belongs to the universal ribosomal protein uS7 family. Part of the 30S ribosomal subunit. Contacts proteins S9 and S11.

In terms of biological role, one of the primary rRNA binding proteins, it binds directly to 16S rRNA where it nucleates assembly of the head domain of the 30S subunit. Is located at the subunit interface close to the decoding center, probably blocks exit of the E-site tRNA. This is Small ribosomal subunit protein uS7 from Mycoplasma pneumoniae (strain ATCC 29342 / M129 / Subtype 1) (Mycoplasmoides pneumoniae).